Consider the following 278-residue polypeptide: Large ribosomal subunit protein uL2 (278 aa).

Positions 201–278 (HGNINDGKAG…IMRSRHQRKK (78 aa)) are disordered. The span at 210–221 (GRSRWRGKKPHV) shows a compositional bias: basic residues.

It belongs to the universal ribosomal protein uL2 family. In terms of assembly, part of the 50S ribosomal subunit. Forms a bridge to the 30S subunit in the 70S ribosome.

One of the primary rRNA binding proteins. Required for association of the 30S and 50S subunits to form the 70S ribosome, for tRNA binding and peptide bond formation. It has been suggested to have peptidyltransferase activity; this is somewhat controversial. Makes several contacts with the 16S rRNA in the 70S ribosome. This is Large ribosomal subunit protein uL2 from Rhizobium rhizogenes (strain K84 / ATCC BAA-868) (Agrobacterium radiobacter).